The following is a 202-amino-acid chain: Riboflavin synthase (202 aa).

Lumazine-binding repeat units follow at residues 1 to 101 (MFTG…MGGH) and 102 to 198 (LVFG…ARLA). 2,4-dihydroxypteridine contacts are provided by residues 4–6 (GII), 47–49 (CLT), 66–68 (EAW), 105–107 (GHV), Lys-140, 149–151 (SLT), and 163–168 (LLIRHS).

As to quaternary structure, homotrimer.

It carries out the reaction 2 6,7-dimethyl-8-(1-D-ribityl)lumazine + H(+) = 5-amino-6-(D-ribitylamino)uracil + riboflavin. The protein operates within cofactor biosynthesis; riboflavin biosynthesis; riboflavin from 2-hydroxy-3-oxobutyl phosphate and 5-amino-6-(D-ribitylamino)uracil: step 2/2. Is inhibited by riboflavin. Product inhibition may be the major mechanism by which RS regulates its enzymatic activity in vivo. Functionally, catalyzes the dismutation of two molecules of 6,7-dimethyl-8-ribityllumazine, resulting in the formation of riboflavin and 5-amino-6-(D-ribitylamino)uracil. The protein is Riboflavin synthase of Brucella abortus (strain 2308).